The sequence spans 264 residues: Thymidylate synthase (264 aa).

Arg-21 provides a ligand contact to dUMP. (6R)-5,10-methylene-5,6,7,8-tetrahydrofolate is bound at residue His-51. 126-127 (RR) contacts dUMP. The Nucleophile role is filled by Cys-146. DUMP contacts are provided by residues 166 to 169 (RSAD), Asn-177, and 207 to 209 (HLY). Asp-169 is a (6R)-5,10-methylene-5,6,7,8-tetrahydrofolate binding site. Ala-263 provides a ligand contact to (6R)-5,10-methylene-5,6,7,8-tetrahydrofolate.

This sequence belongs to the thymidylate synthase family. Bacterial-type ThyA subfamily. Homodimer.

It localises to the cytoplasm. The catalysed reaction is dUMP + (6R)-5,10-methylene-5,6,7,8-tetrahydrofolate = 7,8-dihydrofolate + dTMP. It participates in pyrimidine metabolism; dTTP biosynthesis. Functionally, catalyzes the reductive methylation of 2'-deoxyuridine-5'-monophosphate (dUMP) to 2'-deoxythymidine-5'-monophosphate (dTMP) while utilizing 5,10-methylenetetrahydrofolate (mTHF) as the methyl donor and reductant in the reaction, yielding dihydrofolate (DHF) as a by-product. This enzymatic reaction provides an intracellular de novo source of dTMP, an essential precursor for DNA biosynthesis. In Azotobacter vinelandii (strain DJ / ATCC BAA-1303), this protein is Thymidylate synthase.